The chain runs to 90 residues: YcgL domain-containing protein plu2139 (90 aa).

The region spanning 1-85 is the YcgL domain; that stretch reads MICAIYSSPK…PVENLMNAHL (85 aa).

This is YcgL domain-containing protein plu2139 from Photorhabdus laumondii subsp. laumondii (strain DSM 15139 / CIP 105565 / TT01) (Photorhabdus luminescens subsp. laumondii).